We begin with the raw amino-acid sequence, 514 residues long: ATP synthase subunit alpha (514 aa).

Position 170-177 (170-177 (GDRQIGKT)) interacts with ATP.

Belongs to the ATPase alpha/beta chains family. In terms of assembly, F-type ATPases have 2 components, CF(1) - the catalytic core - and CF(0) - the membrane proton channel. CF(1) has five subunits: alpha(3), beta(3), gamma(1), delta(1), epsilon(1). CF(0) has three main subunits: a(1), b(2) and c(9-12). The alpha and beta chains form an alternating ring which encloses part of the gamma chain. CF(1) is attached to CF(0) by a central stalk formed by the gamma and epsilon chains, while a peripheral stalk is formed by the delta and b chains.

Its subcellular location is the cell inner membrane. The catalysed reaction is ATP + H2O + 4 H(+)(in) = ADP + phosphate + 5 H(+)(out). Functionally, produces ATP from ADP in the presence of a proton gradient across the membrane. The alpha chain is a regulatory subunit. The protein is ATP synthase subunit alpha of Ectopseudomonas mendocina (strain ymp) (Pseudomonas mendocina).